The sequence spans 404 residues: MMFVTGIVLFALAILISVALHECGHMWVARRTGMKVRRYFVGFGPTLWSTRRGETEYGVKAVPLGGFCDIAGMTPVEELDPDERDRAMYKQATWKRVAVLFAGPGMNLAICLVLIYAIALVWGLPNLHPPTRAVIGETGCVAQEVSQGKLEQCTGPGPAALAGIRSGDVVVKVGDTPVSSFDEMAAAVRKSHGSVPIVVERDGTAIVTYVDIESTQRWIPNGQGGELQPATVGAIGVGAARVGPVRYGVFSAMPATFAFTGDLTVEVGKALAALPTKVGALVRAIGGGQRDPQTPISVVGASIIGGDTVDHGLWVAFWFFLAQLNLILATINLLPLLPFDGGHIAVAVFERIRNMVRSARGKVAAAPVNYLKLLPATYVVLVLVVGYMLLTVTADLVNPIRLFQ.

Residues M1–H21 form a helical membrane-spanning segment. H21 is a binding site for Zn(2+). The active site involves E22. H25 lines the Zn(2+) pocket. Residues P104–L124 form a helical membrane-spanning segment. A PDZ domain is found at V121 to G203. D202 serves as a coordination point for Zn(2+). The next 2 membrane-spanning stretches (helical) occupy residues L313–L333 and L373–T393.

This sequence belongs to the peptidase M50B family. Zn(2+) is required as a cofactor.

The protein localises to the cell membrane. In terms of biological role, a probable intramembrane site-2 protease (S2P) that cleaves type-2 transmembrane proteins within their membrane-spanning domains. Cleaves PbpB (PBP3, FtsI); cleavage is inhibited by Wag31-PbpB interaction. Probably also cleaves anti-sigma factors RskA, RslA and RsmA. Its function is as follows. Regulated intramembrane proteolysis (RIP) occurs when an extracytoplasmic signal (possibly oxidative stress) triggers a concerted proteolytic cascade to transmit information and elicit cellular responses. The membrane-spanning regulatory substrate protein (includes anti-sigma factors RskA, RslA, RsmA, and PbpB in M.tuberculosis) is first cut extracytoplasmically (site-1 protease, S1P), then within the membrane itself (site-2 protease, S2P, this entry), while cytoplasmic proteases finish degrading the regulatory protein, liberating the effector protein (ECF sigma factors SigK, SigL and SigM). This Mycobacterium bovis (strain BCG / Pasteur 1173P2) protein is Zinc metalloprotease Rip1 (rip1).